Here is a 191-residue protein sequence, read N- to C-terminus: Glutathione-dependent formaldehyde-activating enzyme (191 aa).

A CENP-V/GFA domain is found at 22–169 (FAGGTLQCLC…LTELGLTPYD (148 aa)). Zn(2+)-binding residues include Cys29, Cys31, Cys50, Cys52, Cys55, Cys97, and Cys100.

This sequence belongs to the Gfa family. Zn(2+) is required as a cofactor.

It catalyses the reaction S-(hydroxymethyl)glutathione = glutathione + formaldehyde. It functions in the pathway one-carbon metabolism; formaldehyde degradation; formate from formaldehyde (glutathione route): step 1/3. Catalyzes the condensation of formaldehyde and glutathione to S-hydroxymethylglutathione. This chain is Glutathione-dependent formaldehyde-activating enzyme, found in Xanthomonas campestris pv. campestris (strain B100).